Consider the following 339-residue polypeptide: DNA-directed RNA polymerase subunit alpha (339 aa).

Positions 1–233 (MVREEVAGST…DLFLPFLHAE (233 aa)) are alpha N-terminal domain (alpha-NTD). Positions 264 to 339 (KKGIPLNCIF…IDLLKNKLSF (76 aa)) are alpha C-terminal domain (alpha-CTD).

This sequence belongs to the RNA polymerase alpha chain family. In plastids the minimal PEP RNA polymerase catalytic core is composed of four subunits: alpha, beta, beta', and beta''. When a (nuclear-encoded) sigma factor is associated with the core the holoenzyme is formed, which can initiate transcription.

The protein resides in the plastid. The protein localises to the chloroplast. It catalyses the reaction RNA(n) + a ribonucleoside 5'-triphosphate = RNA(n+1) + diphosphate. In terms of biological role, DNA-dependent RNA polymerase catalyzes the transcription of DNA into RNA using the four ribonucleoside triphosphates as substrates. In Secale strictum (Mountain rye), this protein is DNA-directed RNA polymerase subunit alpha.